The primary structure comprises 217 residues: Large ribosomal subunit protein uL4 (217 aa).

The tract at residues Arg-42 to Gln-100 is disordered.

The protein belongs to the universal ribosomal protein uL4 family. In terms of assembly, part of the 50S ribosomal subunit.

Functionally, one of the primary rRNA binding proteins, this protein initially binds near the 5'-end of the 23S rRNA. It is important during the early stages of 50S assembly. It makes multiple contacts with different domains of the 23S rRNA in the assembled 50S subunit and ribosome. In terms of biological role, forms part of the polypeptide exit tunnel. In Mycolicibacterium paratuberculosis (strain ATCC BAA-968 / K-10) (Mycobacterium paratuberculosis), this protein is Large ribosomal subunit protein uL4.